The sequence spans 208 residues: 3-demethoxyubiquinol 3-hydroxylase (208 aa).

Residues glutamate 57, glutamate 87, histidine 90, glutamate 139, glutamate 171, and histidine 174 each contribute to the Fe cation site.

Belongs to the COQ7 family. Requires Fe cation as cofactor.

Its subcellular location is the cell membrane. The catalysed reaction is a 5-methoxy-2-methyl-3-(all-trans-polyprenyl)benzene-1,4-diol + AH2 + O2 = a 3-demethylubiquinol + A + H2O. It functions in the pathway cofactor biosynthesis; ubiquinone biosynthesis. Catalyzes the hydroxylation of 2-nonaprenyl-3-methyl-6-methoxy-1,4-benzoquinol during ubiquinone biosynthesis. The sequence is that of 3-demethoxyubiquinol 3-hydroxylase from Burkholderia cenocepacia (strain HI2424).